A 325-amino-acid chain; its full sequence is MISPSSRKGMLKERAMDLVTQTTILPLLFGCLGIFSLFRLLQRTRSKAYLRNAVVVVTGATSGLGKECARVFHAAGAKVVLCGRNVKALEEFTRELADSSSSQGQTHQPCVVTFDLADPGAIAPAAAEILQCFGYVDILINNAGISYRGAISDTIVDVDRKVMEINYFGPVALTKALLPSMVERKRGHIVAISSIQGKISIPFRSAYAASKHATQAFFDCLRAEMKDSDIEVTVISPGYIHTNLSVNAVTADGSRYGALDKNTAQGRSAVEVAQDIFDAVGKKKKDVLLTDFLPTMAVYIRTLAPRLFFRIMASRARKERKSKNS.

Over 1 to 17 (MISPSSRKGMLKERAMD) the chain is Cytoplasmic. A helical; Signal-anchor for type II membrane protein membrane pass occupies residues 18 to 38 (LVTQTTILPLLFGCLGIFSLF). Over 39–325 (RLLQRTRSKA…ARKERKSKNS (287 aa)) the chain is Lumenal. NAD(+) is bound by residues Ser-62 and Leu-64. Ser-194 lines the substrate pocket. NAD(+)-binding residues include Tyr-207, Lys-211, and Thr-242. The active-site Proton acceptor is the Tyr-207.

Belongs to the short-chain dehydrogenases/reductases (SDR) family.

Its subcellular location is the endoplasmic reticulum membrane. Its function is as follows. Putative oxidoreductase. The sequence is that of Dehydrogenase/reductase SDR family member 7B (Dhrs7b) from Rattus norvegicus (Rat).